Reading from the N-terminus, the 422-residue chain is MDKLRITGGAQLRGEVTISGAKNSALPILCAGLLTADPLVLANVPDLNDTSTMLRLLGRMGVRAERGADGIVTVQASQVDNLEAPYDLVKTMRASILVLGPLLARFGQARVSLPGGCTIGQRPVDQHIKGMAALGADIRIEHGFVVAQAARLKGASIRTDMVTVTGTENLLMAAVLAEGQTVLENAAREPEIVDLAELLIKMGARIQGHGTDRIVIDGVASLHGAEHSVIPDRIEAGTFLCAVGAAGGDITLRNAAPDTLGATLDKLIEAGLTIETGPDWIRGAMQGRPRAVGARTHEYPGFATDMQAQLMALDTVAQGTAVIVENIFENRYMHVQELRRMGADIDIDGHTAVVRGVPRLSGAAVMATDLRASASLVIAGLAAEGQTQVDRIYHLDRGYDRMEVKLRALGANIQRLTGKEPA.

22–23 (KN) provides a ligand contact to phosphoenolpyruvate. UDP-N-acetyl-alpha-D-glucosamine is bound at residue Arg-93. Cys-117 functions as the Proton donor in the catalytic mechanism. Cys-117 bears the 2-(S-cysteinyl)pyruvic acid O-phosphothioketal mark. Residues 122–126 (RPVDQ), Asp-305, and Ile-327 contribute to the UDP-N-acetyl-alpha-D-glucosamine site.

The protein belongs to the EPSP synthase family. MurA subfamily.

It localises to the cytoplasm. The catalysed reaction is phosphoenolpyruvate + UDP-N-acetyl-alpha-D-glucosamine = UDP-N-acetyl-3-O-(1-carboxyvinyl)-alpha-D-glucosamine + phosphate. It functions in the pathway cell wall biogenesis; peptidoglycan biosynthesis. Cell wall formation. Adds enolpyruvyl to UDP-N-acetylglucosamine. The polypeptide is UDP-N-acetylglucosamine 1-carboxyvinyltransferase (Bordetella petrii (strain ATCC BAA-461 / DSM 12804 / CCUG 43448)).